The chain runs to 434 residues: Methylenetetrahydrofolate--tRNA-(uracil-5-)-methyltransferase TrmFO (434 aa).

9-14 (GAGLAG) provides a ligand contact to FAD.

Belongs to the MnmG family. TrmFO subfamily. It depends on FAD as a cofactor.

The protein localises to the cytoplasm. The enzyme catalyses uridine(54) in tRNA + (6R)-5,10-methylene-5,6,7,8-tetrahydrofolate + NADH + H(+) = 5-methyluridine(54) in tRNA + (6S)-5,6,7,8-tetrahydrofolate + NAD(+). It carries out the reaction uridine(54) in tRNA + (6R)-5,10-methylene-5,6,7,8-tetrahydrofolate + NADPH + H(+) = 5-methyluridine(54) in tRNA + (6S)-5,6,7,8-tetrahydrofolate + NADP(+). Functionally, catalyzes the folate-dependent formation of 5-methyl-uridine at position 54 (M-5-U54) in all tRNAs. The sequence is that of Methylenetetrahydrofolate--tRNA-(uracil-5-)-methyltransferase TrmFO from Fusobacterium nucleatum subsp. nucleatum (strain ATCC 25586 / DSM 15643 / BCRC 10681 / CIP 101130 / JCM 8532 / KCTC 2640 / LMG 13131 / VPI 4355).